The chain runs to 192 residues: Large ribosomal subunit protein uL5 (192 aa).

It belongs to the universal ribosomal protein uL5 family. In terms of assembly, part of the 50S ribosomal subunit; part of the 5S rRNA/L5/L18/L25 subcomplex. Contacts the 5S rRNA and the P site tRNA. Forms a bridge to the 30S subunit in the 70S ribosome.

Its function is as follows. This is one of the proteins that bind and probably mediate the attachment of the 5S RNA into the large ribosomal subunit, where it forms part of the central protuberance. In the 70S ribosome it contacts protein S13 of the 30S subunit (bridge B1b), connecting the 2 subunits; this bridge is implicated in subunit movement. Contacts the P site tRNA; the 5S rRNA and some of its associated proteins might help stabilize positioning of ribosome-bound tRNAs. The protein is Large ribosomal subunit protein uL5 of Sphingopyxis alaskensis (strain DSM 13593 / LMG 18877 / RB2256) (Sphingomonas alaskensis).